A 363-amino-acid chain; its full sequence is Mitogen-activated protein kinase 12 (363 aa).

Residues 25 to 309 (YKDLKQVGTG…AAEALAFPFF (285 aa)) enclose the Protein kinase domain. ATP-binding positions include 31–39 (VGTGAYGTV) and Lys54. The Proton acceptor role is filled by Asp151. Thr181 bears the Phosphothreonine mark. Positions 181–183 (TGY) match the TXY motif. At Tyr183 the chain carries Phosphotyrosine.

This sequence belongs to the protein kinase superfamily. CMGC Ser/Thr protein kinase family. MAP kinase subfamily. The cofactor is Mg(2+). Post-translationally, dually phosphorylated on Thr-181 and Tyr-183, which activates the enzyme.

It is found in the cytoplasm. The catalysed reaction is L-seryl-[protein] + ATP = O-phospho-L-seryl-[protein] + ADP + H(+). It carries out the reaction L-threonyl-[protein] + ATP = O-phospho-L-threonyl-[protein] + ADP + H(+). With respect to regulation, activated by threonine and tyrosine phosphorylation. Serine/threonine kinase which acts as an essential component of the MAP kinase signal transduction pathway. MAPK12 is one of the four p38 MAPKs which play an important role in the cascades of cellular responses evoked by extracellular stimuli such as pro-inflammatory cytokines or physical stress leading to direct activation of transcription factors. Accordingly, p38 MAPKs phosphorylate a broad range of proteins and it has been estimated that they may have approximately 200 to 300 substrates each. Some of the targets are downstream kinases such as MAPKAPK2, which are activated through phosphorylation and further phosphorylate additional targets. In Danio rerio (Zebrafish), this protein is Mitogen-activated protein kinase 12 (mapk12).